The following is a 310-amino-acid chain: Transcription factor MYB53 (310 aa).

HTH myb-type domains lie at 9 to 61 (ETGL…TNYL) and 62 to 116 (RPDI…KKKL). 2 DNA-binding regions (H-T-H motif) span residues 37–61 (WSAL…TNYL) and 89–112 (WSMI…NTHL).

As to quaternary structure, interacts with FBX5. In terms of tissue distribution, highly expressed in roots and at lower levels in leaves, stems and flowers.

The protein resides in the nucleus. In terms of biological role, probable transcription factor. The sequence is that of Transcription factor MYB53 from Arabidopsis thaliana (Mouse-ear cress).